We begin with the raw amino-acid sequence, 119 residues long: Small ribosomal subunit protein bS6 (119 aa).

The segment at 95 to 119 is disordered; that stretch reads AVTEPSPLAKGNEKREDRKESEDAE. Residues 105 to 119 show a composition bias toward basic and acidic residues; the sequence is GNEKREDRKESEDAE.

The protein belongs to the bacterial ribosomal protein bS6 family.

Functionally, binds together with bS18 to 16S ribosomal RNA. The sequence is that of Small ribosomal subunit protein bS6 from Halorhodospira halophila (strain DSM 244 / SL1) (Ectothiorhodospira halophila (strain DSM 244 / SL1)).